Reading from the N-terminus, the 304-residue chain is Putative S-adenosyl-L-methionine-dependent methyltransferase MUL_0816 (304 aa).

S-adenosyl-L-methionine-binding positions include Asp-130 and 159–160 (DL).

It belongs to the UPF0677 family.

Its function is as follows. Exhibits S-adenosyl-L-methionine-dependent methyltransferase activity. This Mycobacterium ulcerans (strain Agy99) protein is Putative S-adenosyl-L-methionine-dependent methyltransferase MUL_0816.